The following is an 87-amino-acid chain: Small ribosomal subunit protein bS20 (87 aa).

It belongs to the bacterial ribosomal protein bS20 family.

Functionally, binds directly to 16S ribosomal RNA. The protein is Small ribosomal subunit protein bS20 of Clostridium perfringens (strain ATCC 13124 / DSM 756 / JCM 1290 / NCIMB 6125 / NCTC 8237 / Type A).